The following is a 254-amino-acid chain: Alcohol dehydrogenase 2 (254 aa).

Phe10–Leu33 lines the NAD(+) pocket. Ser138 is a binding site for substrate. Tyr151 (proton acceptor) is an active-site residue.

The protein belongs to the short-chain dehydrogenases/reductases (SDR) family. In terms of assembly, homodimer.

The enzyme catalyses a primary alcohol + NAD(+) = an aldehyde + NADH + H(+). The catalysed reaction is a secondary alcohol + NAD(+) = a ketone + NADH + H(+). The polypeptide is Alcohol dehydrogenase 2 (Adh2) (Drosophila mojavensis (Fruit fly)).